Reading from the N-terminus, the 187-residue chain is HTH-type transcriptional regulator NfxB (187 aa).

A DNA-binding region (H-T-H motif) is located at residues 26-45; the sequence is LKELAEAAGVSKATLHRFCG.

Functionally, confers resistance to guinolones. May negatively regulate the expression of genes that are associated with cell permeability to drugs. This chain is HTH-type transcriptional regulator NfxB (nfxB), found in Pseudomonas aeruginosa (strain ATCC 15692 / DSM 22644 / CIP 104116 / JCM 14847 / LMG 12228 / 1C / PRS 101 / PAO1).